The following is a 525-amino-acid chain: uncharacterized protein (525 aa).

The residue at position 55 (serine 55) is a Phosphoserine. The next 13 membrane-spanning stretches (helical) occupy residues 81–101 (AYIV…PNFY), 120–140 (LLGQ…LGPL), 147–167 (KLVY…CALA), 173–193 (LVIS…NVAG), 208–228 (MYMF…GTGV), 238–258 (WLYW…VFTP), 295–315 (FVFF…SLGI), 318–338 (GFVN…YFSI), 350–370 (YMAA…QCWL), 388–408 (FIMT…FAFC), 413–433 (IHYI…YHIW), 454–474 (AFEL…ALMF), and 484–504 (AVVG…YFYG).

It belongs to the major facilitator superfamily. CAR1 family.

Its subcellular location is the membrane. This is an uncharacterized protein from Schizosaccharomyces pombe (strain 972 / ATCC 24843) (Fission yeast).